The sequence spans 577 residues: Multidrug transporter TPO1_2 (577 aa).

The disordered stretch occupies residues M1 to S63. N44 and N58 each carry an N-linked (GlcNAc...) asparagine glycan. Transmembrane regions (helical) follow at residues V137 to F157, I167 to A187, G204 to K224, F234 to M254, A263 to S283, W293 to F313, P368 to L388, E406 to M426, L446 to T466, W475 to P495, Y504 to F526, and Y541 to L561.

This sequence belongs to the major facilitator superfamily. DHA1 family. Polyamines/proton antiporter (TC 2.A.1.2.16) subfamily.

It localises to the cell membrane. Functionally, multidrug resistance transporter involved in resistance to azole antifungal drugs such as the imidazoles miconazole, ketoconazole, and tioconazole; as well as the triazoles itraconazole and fluconazole. Also plays a role in the resistance to other antifungal drug families such as the polyene amphotericin B, the pyrimide analog flucytosine, the fungicide mancozeb, and the polyamine spermine. Decreases the intracellular accumulation of clotrimazole by mediating its extrusion from cells. Plays a role in biofilm formation. The protein is Multidrug transporter TPO1_2 of Candida glabrata (strain ATCC 2001 / BCRC 20586 / JCM 3761 / NBRC 0622 / NRRL Y-65 / CBS 138) (Yeast).